A 366-amino-acid chain; its full sequence is Chorismate synthase (366 aa).

R48 is a binding site for NADP(+). Residues 125–127, 241–242, G285, 300–304, and R326 each bind FMN; these read RSS, NA, and KPTSS.

Belongs to the chorismate synthase family. Homotetramer. The cofactor is FMNH2.

It catalyses the reaction 5-O-(1-carboxyvinyl)-3-phosphoshikimate = chorismate + phosphate. The protein operates within metabolic intermediate biosynthesis; chorismate biosynthesis; chorismate from D-erythrose 4-phosphate and phosphoenolpyruvate: step 7/7. Functionally, catalyzes the anti-1,4-elimination of the C-3 phosphate and the C-6 proR hydrogen from 5-enolpyruvylshikimate-3-phosphate (EPSP) to yield chorismate, which is the branch point compound that serves as the starting substrate for the three terminal pathways of aromatic amino acid biosynthesis. This reaction introduces a second double bond into the aromatic ring system. This is Chorismate synthase from Paracoccus denitrificans (strain Pd 1222).